Reading from the N-terminus, the 503-residue chain is Protein-cysteine N-palmitoyltransferase HHAT-like protein (503 aa).

Helical transmembrane passes span 12–31 (LGLYSLVLSGALAYAGRGLL), 65–87 (WVMWFTNFRNVIVFALSGHVLFA), 100–122 (WMYAVYGVLAVVGTMGPWYLLLL), 127–149 (MVLYVASLLGQRWLCLALGLASL), 250–272 (AGLSAAAIVAVDVFFHFFYILTI), 287–309 (LAGLAYSNLVYDWVKAAVLFGVV), 426–445 (VRALCGAVNFWAIIMYNLVS), and 460–482 (ILTGFPQTTLAVLFVTYCGVQLV).

It belongs to the membrane-bound acyltransferase family. HHAT subfamily. As to quaternary structure, interacts with SHH.

It is found in the endoplasmic reticulum membrane. Negatively regulates N-terminal palmitoylation of SHH by HHAT/SKN. In Mus musculus (Mouse), this protein is Protein-cysteine N-palmitoyltransferase HHAT-like protein (Hhatl).